A 221-amino-acid chain; its full sequence is MYAPIRSPITELNESTPSSIPVATSYATCSASFAKLVALLVDDMAGLSIVLSEIYIYFKLLFLIVITESIQNKLEDIVKEYKKRGIDLGIITNVDEVSLFFDTSQYAEAIKKKVIEIVRQSGTGRAKIDFKTNGYVIKFAIQRGYYNRNTIEKLKSLVDYLHEQKIRCGYEIKGDLIFVMSLTDFLQKISEDVKEKLKDERVKIASKQEYTKYIVVIKVEQ.

Over 1–45 (MYAPIRSPITELNESTPSSIPVATSYATCSASFAKLVALLVDDMA) the chain is Extracellular. Residues 46–66 (GLSIVLSEIYIYFKLLFLIVI) traverse the membrane as a helical segment. The Cytoplasmic portion of the chain corresponds to 67–221 (TESIQNKLED…KYIVVIKVEQ (155 aa)).

The protein localises to the host membrane. This is an uncharacterized protein from Acidianus filamentous virus 1 (isolate United States/Yellowstone) (AFV-1).